The following is a 240-amino-acid chain: Pyridoxine 5'-phosphate synthase (240 aa).

A 3-amino-2-oxopropyl phosphate-binding site is contributed by Asn-7. 9–10 (DH) provides a ligand contact to 1-deoxy-D-xylulose 5-phosphate. Arg-18 contributes to the 3-amino-2-oxopropyl phosphate binding site. His-43 functions as the Proton acceptor in the catalytic mechanism. 1-deoxy-D-xylulose 5-phosphate is bound by residues Arg-45 and His-50. Glu-70 acts as the Proton acceptor in catalysis. Position 100 (Thr-100) interacts with 1-deoxy-D-xylulose 5-phosphate. Residue His-191 is the Proton donor of the active site. Residues Gly-192 and 213–214 (GH) each bind 3-amino-2-oxopropyl phosphate.

The protein belongs to the PNP synthase family. In terms of assembly, homooctamer; tetramer of dimers.

Its subcellular location is the cytoplasm. The enzyme catalyses 3-amino-2-oxopropyl phosphate + 1-deoxy-D-xylulose 5-phosphate = pyridoxine 5'-phosphate + phosphate + 2 H2O + H(+). The protein operates within cofactor biosynthesis; pyridoxine 5'-phosphate biosynthesis; pyridoxine 5'-phosphate from D-erythrose 4-phosphate: step 5/5. Catalyzes the complicated ring closure reaction between the two acyclic compounds 1-deoxy-D-xylulose-5-phosphate (DXP) and 3-amino-2-oxopropyl phosphate (1-amino-acetone-3-phosphate or AAP) to form pyridoxine 5'-phosphate (PNP) and inorganic phosphate. This chain is Pyridoxine 5'-phosphate synthase, found in Gloeothece citriformis (strain PCC 7424) (Cyanothece sp. (strain PCC 7424)).